Here is a 128-residue protein sequence, read N- to C-terminus: MIKLRLKRFGKKREASFRLVACNSTSRRDGRPLQELGFYNPRTKETRLDAEALRVRLSQGAQPTDAVRFLLEKGGLLEKTVRPAETIGKLKQAAAREAAVKQAAKDAAEAKAAAANESDDSGTDSTES.

The tract at residues alanine 107 to serine 128 is disordered. Over residues glutamate 117–serine 128 the composition is skewed to acidic residues.

This sequence belongs to the bacterial ribosomal protein bS16 family.

This Synechococcus sp. (strain CC9311) protein is Small ribosomal subunit protein bS16.